Reading from the N-terminus, the 552-residue chain is FERRY endosomal RAB5 effector complex subunit 3 (552 aa).

Ser79 is modified (phosphoserine).

In terms of assembly, component of the FERRY complex composed of five subunits, TBCK, PPP1R21, FERRY3, CRYZL1 and GATD1 with a ratio of 1:2:1:2:4, respectively.

It localises to the cytoplasm. It is found in the early endosome. Component of the FERRY complex (Five-subunit Endosomal Rab5 and RNA/ribosome intermediary). The FERRY complex directly interacts with mRNAs and RAB5A, and functions as a RAB5A effector involved in the localization and the distribution of specific mRNAs most likely by mediating their endosomal transport. The complex recruits mRNAs and ribosomes to early endosomes through direct mRNA-interaction. Plays a role in mast cell degranulation. The chain is FERRY endosomal RAB5 effector complex subunit 3 from Mus musculus (Mouse).